Reading from the N-terminus, the 522-residue chain is Na(+)/H(+) antiporter NhaB (522 aa).

The next 9 helical transmembrane spans lie at 13-33 (FLGNSPDWYKLAIMGFLIINP), 98-118 (LLLVFMVAGIYFMKQLLLFVF), 140-160 (AFLSAFLDALTVIAVVISVSV), 239-259 (FFIRMLPVTLPVFIFGLLVCL), 304-324 (AIIGVWLVLALHLAEVGLVGL), 356-376 (LTVFFAVVAVIIEQSLFTPII), 390-410 (LFYLFNGLLSSVSDNVFVGTV), 446-466 (ATPNGQAAFLFLLTSALAPLI), and 477-497 (ALPYTLVMTIVGLLGVEFLLV).

This sequence belongs to the NhaB Na(+)/H(+) (TC 2.A.34) antiporter family.

It localises to the cell inner membrane. It catalyses the reaction 2 Na(+)(in) + 3 H(+)(out) = 2 Na(+)(out) + 3 H(+)(in). Functionally, na(+)/H(+) antiporter that extrudes sodium in exchange for external protons. The polypeptide is Na(+)/H(+) antiporter NhaB (Yersinia pestis bv. Antiqua (strain Angola)).